We begin with the raw amino-acid sequence, 296 residues long: Ribosomal RNA small subunit methyltransferase A (296 aa).

S-adenosyl-L-methionine contacts are provided by asparagine 31, leucine 33, glycine 58, glutamate 79, aspartate 111, and asparagine 136.

The protein belongs to the class I-like SAM-binding methyltransferase superfamily. rRNA adenine N(6)-methyltransferase family. RsmA subfamily.

The protein resides in the cytoplasm. The enzyme catalyses adenosine(1518)/adenosine(1519) in 16S rRNA + 4 S-adenosyl-L-methionine = N(6)-dimethyladenosine(1518)/N(6)-dimethyladenosine(1519) in 16S rRNA + 4 S-adenosyl-L-homocysteine + 4 H(+). Specifically dimethylates two adjacent adenosines (A1518 and A1519) in the loop of a conserved hairpin near the 3'-end of 16S rRNA in the 30S particle. May play a critical role in biogenesis of 30S subunits. This is Ribosomal RNA small subunit methyltransferase A from Lactobacillus delbrueckii subsp. bulgaricus (strain ATCC BAA-365 / Lb-18).